We begin with the raw amino-acid sequence, 204 residues long: Large ribosomal subunit protein uL22m (204 aa).

The transit peptide at 1 to 38 (MAAVILERLGALWVQNLRGKLALGILPQSHIHTSASLE) directs the protein to the mitochondrion.

Belongs to the universal ribosomal protein uL22 family. In terms of assembly, component of the mitochondrial ribosome large subunit (39S) which comprises a 16S rRNA and about 50 distinct proteins.

The protein localises to the mitochondrion. The protein is Large ribosomal subunit protein uL22m (MRPL22) of Bos taurus (Bovine).